We begin with the raw amino-acid sequence, 341 residues long: DER1-like family member protein 1 (341 aa).

Residues 1–41 (MAGPRNVRTLHGNGGRNNDVMGPKEFWLNIPPITRTLFTLA) are Cytoplasmic-facing. A helical membrane pass occupies residues 42-62 (IVMTIVGRLNLINPWYFIYVW). At 63–122 (NLTFKKVQIWRLLTSCVMLSSRAMPALMELYSIYDRSSQLERGHFGPGLSNRRGPMVTVD) the chain is on the lumenal side. The helical transmembrane segment at 123-143 (YAYYLCFCILAITTATTIIYG) threads the bilayer. Topologically, residues 144–170 (SYYPVVLTSGFISCITYTWSIDNANVQ) are cytoplasmic. The helical transmembrane segment at 171 to 191 (IMFYGLIPVWGKYFPLIQLFI) threads the bilayer. S192 is a topological domain (lumenal). Residues 193–213 (FVFNEGDFVISLIGFTTGYLY) traverse the membrane as a helical segment. At 214 to 341 (TCLDTHTLGP…GQTNSPSDSQ (128 aa)) the chain is on the cytoplasmic side. Polar residues-rich tracts occupy residues 276–286 (SSQRETRTFSG) and 296–341 (ATLS…SDSQ). Residues 276-341 (SSQRETRTFS…GQTNSPSDSQ (66 aa)) are disordered.

The protein belongs to the derlin family.

Its subcellular location is the endoplasmic reticulum membrane. Its function is as follows. May be involved in the degradation process of some misfolded endoplasmic reticulum (ER) luminal proteins. Its precise role is however unclear and its inability to complement der1 mutations, suggests either that it is not involved in degradation process of misfolded proteins, or that it participates in the destruction of specific misfolded ER luminal proteins. This Saccharomyces cerevisiae (strain ATCC 204508 / S288c) (Baker's yeast) protein is DER1-like family member protein 1 (DFM1).